The following is a 156-amino-acid chain: Ribosomal RNA large subunit methyltransferase H (156 aa).

Residues Leu-73, Gly-104, and 123–128 (LSALTL) contribute to the S-adenosyl-L-methionine site.

The protein belongs to the RNA methyltransferase RlmH family. Homodimer.

The protein resides in the cytoplasm. The enzyme catalyses pseudouridine(1915) in 23S rRNA + S-adenosyl-L-methionine = N(3)-methylpseudouridine(1915) in 23S rRNA + S-adenosyl-L-homocysteine + H(+). Specifically methylates the pseudouridine at position 1915 (m3Psi1915) in 23S rRNA. The chain is Ribosomal RNA large subunit methyltransferase H from Erwinia tasmaniensis (strain DSM 17950 / CFBP 7177 / CIP 109463 / NCPPB 4357 / Et1/99).